Reading from the N-terminus, the 344-residue chain is UDP-glycosyltransferase 73C4 (344 aa).

UDP-alpha-D-glucose-binding positions include Ser145, 202–203, 220–228, and 242–245; these read WA, HCGWNSSLE, and FAEQ.

This sequence belongs to the UDP-glycosyltransferase family. Expressed in flowers and fruits.

The protein resides in the cytoplasm. The protein localises to the nucleus. Its function is as follows. Probable glucosyltransferase that cannot glycosylate abscisic acid (ABA) and auxin (IAA). This is UDP-glycosyltransferase 73C4 from Solanum lycopersicum (Tomato).